Reading from the N-terminus, the 782-residue chain is Large T antigen (782 aa).

Methionine 1 is subject to N-acetylmethionine; by host. One can recognise a J domain in the interval 12 to 75 (RLLELLKLPR…VYNLRMNLGG (64 aa)). Disordered regions lie at residues 74–97 (GGTGFQGSPPRTAERGTEESGHSP) and 145–291 (YEEP…APSD). The segment covering 85–97 (TAERGTEESGHSP) has biased composition (basic and acidic residues). The LXCXE motif signature appears at 142–146 (LFCYE). A compositionally biased stretch (low complexity) spans 148–161 (PLLSPNPSSPTDTP). Over residues 199 to 209 (ATGGGGGGVHA) the composition is skewed to gly residues. Composition is skewed to low complexity over residues 233–247 (SQGGSESMGGSDSSG) and 264–274 (ESYSQSCSQSS). A Phosphothreonine; by host modification is found at threonine 278. The Nuclear localization signal signature appears at 279 to 286 (PPKKARED). The segment at residues 293-407 (PSSLTGYLSH…TENKPGLHQF (115 aa)) is a DNA-binding region (T-ag OBD). A T-ag D1-type zinc finger spans residues 416–510 (QKAVDWIMVA…RRLKLVECTR (95 aa)). Residues cysteine 453, cysteine 456, histidine 466, and histidine 470 each coordinate Zn(2+). The region spanning 549 to 709 (DFPQTLFKML…PHLAQSLEKC (161 aa)) is the SF3 helicase domain. Position 575-582 (575-582 (GPVNSGKT)) interacts with ATP.

In terms of assembly, forms homohexamers in the presence of ATP. Interacts with host HDAC1. Interacts (via LXCXE domain) with host RB1; the interaction induces the aberrant dissociation of RB1-E2F1 complex thereby disrupting RB1's activity. Interacts (via LXCXE domain) with host pRB-related proteins RBL1 and RBL2. Interacts (via C-terminus) with host TOP1 and POLA1 allowing DNA replication. Interacts with host preinitiation complex components TBP, TFIIA and TFIID to regulate transcription initiation. The cofactor is Mg(2+). In terms of processing, phosphorylated on both serine and threonine residues. Small t antigen inhibits the dephosphorylation by the AC form of PP2A. O-Glycosylated near the C-terminal region. Post-translationally, acetylated by CBP in a TP53-dependent manner.

Its subcellular location is the host nucleus. The catalysed reaction is Couples ATP hydrolysis with the unwinding of duplex DNA by translocating in the 3'-5' direction.. It catalyses the reaction ATP + H2O = ADP + phosphate + H(+). In terms of biological role, isoform large T antigen is a key early protein essential for both driving viral replication and inducing cellular transformation. Plays a role in viral genome replication by driving entry of quiescent cells into the cell cycle and by autoregulating the synthesis of viral early mRNA. Displays highly oncogenic activities by corrupting the host cellular checkpoint mechanisms that guard cell division and the transcription, replication, and repair of DNA. Participates in the modulation of cellular gene expression preceeding viral DNA replication. This step involves binding to host key cell cycle regulators retinoblastoma protein RB1/pRb and TP53. Induces the disassembly of host E2F1 transcription factors from RB1, thus promoting transcriptional activation of E2F1-regulated S-phase genes. Inhibits host TP53 binding to DNA, abrogating the ability of TP53 to stimulate gene expression. Plays the role of a TFIID-associated factor (TAF) in transcription initiation for all three RNA polymerases, by stabilizing the TBP-TFIIA complex on promoters. Initiates viral DNA replication and unwinding via interactions with the viral origin of replication. Binds two adjacent sites in the SV40 origin. The replication fork movement is facilitated by Large T antigen helicase activity. Has processive 3'-5' DNA helicase activity which requires a short 3' single-stranded region and ATP. Activates the transcription of viral late mRNA, through host TBP and TFIIA stabilization. Interferes with histone deacetylation mediated by HDAC1, leading to activation of transcription. This Mus musculus (Mouse) protein is Large T antigen.